The primary structure comprises 303 residues: Aspartate carbamoyltransferase catalytic subunit (303 aa).

The carbamoyl phosphate site is built by Arg-51 and Thr-52. Residue Lys-80 coordinates L-aspartate. 3 residues coordinate carbamoyl phosphate: Arg-101, His-129, and Gln-132. Residues Arg-162 and Arg-221 each coordinate L-aspartate. Carbamoyl phosphate-binding residues include Leu-260 and Pro-261.

It belongs to the aspartate/ornithine carbamoyltransferase superfamily. ATCase family. In terms of assembly, heterooligomer of catalytic and regulatory chains.

The catalysed reaction is carbamoyl phosphate + L-aspartate = N-carbamoyl-L-aspartate + phosphate + H(+). The protein operates within pyrimidine metabolism; UMP biosynthesis via de novo pathway; (S)-dihydroorotate from bicarbonate: step 2/3. Catalyzes the condensation of carbamoyl phosphate and aspartate to form carbamoyl aspartate and inorganic phosphate, the committed step in the de novo pyrimidine nucleotide biosynthesis pathway. The chain is Aspartate carbamoyltransferase catalytic subunit from Saccharolobus islandicus (strain M.16.4 / Kamchatka #3) (Sulfolobus islandicus).